We begin with the raw amino-acid sequence, 1145 residues long: Protocadherin-19 (1145 aa).

The N-terminal stretch at 1–21 (MESLLLPVLLLLAVLWTQAAA) is a signal peptide. Cadherin domains are found at residues 22-129 (LINL…APSF), 130-238 (PAAQ…NPVF), 239-346 (GEST…PPII), 350-453 (SVNS…HPHF), 454-563 (SKPY…TPVI), and 569-672 (INGT…QESM). Topologically, residues 22–678 (LINLKYSVEE…QESMGSVNLS (657 aa)) are extracellular. Positions 31, 32, 88, and 90 each coordinate Ca(2+). Cys93 and Cys99 are disulfide-bonded. Positions 121, 123, 124, 125, 140, 155, 157, 199, 212, 230, 231, 232, 233, 234, and 249 each coordinate Ca(2+). N-linked (GlcNAc...) asparagine glycosylation is present at Asn261. Residues Asp264, Asp266, Asn270, Asp305, Glu307, Asp338, Asn340, Asp341, Asn342, Glu360, Asp375, Asp377, Asn381, Asp412, and Glu414 each coordinate Ca(2+). A glycan (N-linked (GlcNAc...) asparagine) is linked at Asn420. Asp427, Asp445, Glu446, Asn447, Asp448, Asn449, Glu464, Asp479, Asp481, Asn485, Asn522, Glu524, and Asp537 together coordinate Ca(2+). N-linked (GlcNAc...) asparagine glycosylation is present at Asn485. Asn546 is a glycosylation site (N-linked (GlcNAc...) asparagine). Ca(2+) is bound by residues Asp555, Val556, Asn557, Asp558, and Asn559. N-linked (GlcNAc...) asparagine glycosylation is present at Asn570. The Ca(2+) site is built by Asp594, Asp596, Asn600, and Asp646. An N-linked (GlcNAc...) asparagine glycan is attached at Asn676. A helical membrane pass occupies residues 679-699 (LIFIIALGSIAGILFVTMIFV). The Cytoplasmic segment spans residues 700–1145 (AIKCKRDNKE…SVKRLKDIVL (446 aa)). Disordered stretches follow at residues 901–921 (GNSL…EHDV) and 1094–1145 (LEHH…DIVL). Basic and acidic residues-rich tracts occupy residues 906 to 921 (DSGH…EHDV) and 1106 to 1145 (SEAE…DIVL).

As to quaternary structure, homodimer; antiparallel.

It localises to the cell membrane. In terms of biological role, calcium-dependent cell-adhesion protein. The protein is Protocadherin-19 (Pcdh19) of Mus musculus (Mouse).